Here is a 575-residue protein sequence, read N- to C-terminus: Probable lysosomal cobalamin transporter (575 aa).

A run of 5 helical transmembrane segments spans residues 8 to 28 (LIWVVYAVVVVVLFAVASVFI), 46 to 66 (IVAITSLLATILLLPVDVALV), 95 to 115 (LVYYILYSLDILLCLLVVPFV), 144 to 164 (YTLSFIAILIILFLVGVFVPI), and 188 to 208 (ALTFALGLLITIGMYVYALHT). N-linked (GlcNAc...) asparagine glycosylation is present at N233. 4 helical membrane-spanning segments follow: residues 314 to 334 (LVGLILLLLVLLIWVSMILTA), 376 to 396 (AIFTMLVLLLFFGTVVGIATV), 420 to 440 (VMTAILMLSILALNYSISMIV), and 504 to 524 (FGAIFFWSQFAFIGVYLLALI). Residues 537-549 (QLDEDAEEAEEEA) are compositionally biased toward acidic residues. The tract at residues 537 to 556 (QLDEDAEEAEEEALLSGSRR) is disordered.

It belongs to the LIMR family. LMBRD1 subfamily.

The protein resides in the lysosome membrane. In terms of biological role, probable lysosomal cobalamin transporter. Required to export cobalamin from lysosomes allowing its conversion to cofactors. The protein is Probable lysosomal cobalamin transporter of Emericella nidulans (strain FGSC A4 / ATCC 38163 / CBS 112.46 / NRRL 194 / M139) (Aspergillus nidulans).